We begin with the raw amino-acid sequence, 202 residues long: Small ribosomal subunit protein uS4 (202 aa).

Positions 1-13 (MSRYRGPRLRVTR) are enriched in basic residues. Residues 1 to 42 (MSRYRGPRLRVTRRLGELPGLTRKASKKSNPPGQHGQARRKR) form a disordered region. The S4 RNA-binding domain occupies 90–152 (NRLDNVCFRL…KASKKLVEGN (63 aa)).

This sequence belongs to the universal ribosomal protein uS4 family. In terms of assembly, part of the 30S ribosomal subunit. Contacts protein S5. The interaction surface between S4 and S5 is involved in control of translational fidelity.

One of the primary rRNA binding proteins, it binds directly to 16S rRNA where it nucleates assembly of the body of the 30S subunit. In terms of biological role, with S5 and S12 plays an important role in translational accuracy. This chain is Small ribosomal subunit protein uS4, found in Prochlorococcus marinus (strain MIT 9312).